The primary structure comprises 133 residues: Triatox (133 aa).

A signal peptide spans Met-1–Val-22. Residues Thr-23–Glu-125 enclose the CUB domain. The cysteines at positions 70 and 86 are disulfide-linked.

This sequence belongs to the venom CUB family. In terms of tissue distribution, expressed by the venom gland.

Its subcellular location is the secreted. May function as an antimicrobial peptide and may be related to the innate defense of the insect in the salivary glands. The chain is Triatox from Triatoma infestans (Assassin bug).